Consider the following 279-residue polypeptide: Biotin synthase (279 aa).

The 231-residue stretch at 2-232 (VRNSRLDICS…NVTIKIAAGR (231 aa)) folds into the Radical SAM core domain. Positions 20, 24, and 27 each coordinate [4Fe-4S] cluster. Cysteine 96, cysteine 156, and lysine 227 together coordinate [2Fe-2S] cluster.

This sequence belongs to the radical SAM superfamily. Biotin synthase family. Homodimer. It depends on [4Fe-4S] cluster as a cofactor. [2Fe-2S] cluster is required as a cofactor.

The catalysed reaction is (4R,5S)-dethiobiotin + (sulfur carrier)-SH + 2 reduced [2Fe-2S]-[ferredoxin] + 2 S-adenosyl-L-methionine = (sulfur carrier)-H + biotin + 2 5'-deoxyadenosine + 2 L-methionine + 2 oxidized [2Fe-2S]-[ferredoxin]. The protein operates within cofactor biosynthesis; biotin biosynthesis; biotin from 7,8-diaminononanoate: step 2/2. Catalyzes the conversion of dethiobiotin (DTB) to biotin by the insertion of a sulfur atom into dethiobiotin via a radical-based mechanism. The sequence is that of Biotin synthase from Thermotoga neapolitana (strain ATCC 49049 / DSM 4359 / NBRC 107923 / NS-E).